Here is a 441-residue protein sequence, read N- to C-terminus: Heat shock factor protein 4 (441 aa).

A DNA-binding region spans residues N17–K121. A hydrophobic repeat HR-A/B region spans residues T130 to V205.

This sequence belongs to the HSF family. Predominantly expressed in the eye.

It is found in the nucleus. Functionally, heat-shock transcription factor that specifically binds heat shock promoter elements (HSE). Required for denucleation and organelle rupture and degradation that occur during eye lens terminal differentiation, when fiber cells that compose the lens degrade all membrane-bound organelles in order to provide lens with transparency to allow the passage of light. In this process, may regulate denucleation of lens fiber cells in part by activating dnase1l1l and dnase2b transcription. May be involved in DNA repair through the transcriptional regulation of rad51. May up-regulate TP53 protein in lens fiber cells, possibly through protein stabilization. In the eye lens, controls the expression of alpha-crystallin B chain/CRYAB and consequently may be involved in the regulation of lysosomal acidification. This Danio rerio (Zebrafish) protein is Heat shock factor protein 4.